A 239-amino-acid polypeptide reads, in one-letter code: Large ribosomal subunit protein bL25 (239 aa).

Residues K211 to K239 form a disordered region. Over residues S226–K239 the composition is skewed to polar residues.

Belongs to the bacterial ribosomal protein bL25 family. CTC subfamily. As to quaternary structure, part of the 50S ribosomal subunit; part of the 5S rRNA/L5/L18/L25 subcomplex. Contacts the 5S rRNA. Binds to the 5S rRNA independently of L5 and L18.

This is one of the proteins that binds to the 5S RNA in the ribosome where it forms part of the central protuberance. The polypeptide is Large ribosomal subunit protein bL25 (Endomicrobium trichonymphae).